The primary structure comprises 438 residues: MYLIADWRRTHYSEEVIPEMDGQEVILMGWVHSIRALGKLAFVILRDREGTIQAVVPKQKVDEETFAIAKKLGKEDIIAIRGKVVANEKAPKGFEVIPIEIRVLNKADAPLPLDPSEKVAAEIDTRLDKRFLDIRRPKIQAIFKIRSEMLRSIRKTFADGGFVEVNTPKLVASATEGGTELFPISYFEKEAFLGQSPQLYKQMMMAGGFDKVFEIAQIFRAEEHNTRRHLNEAISIDTEMSFVNEKDAMAMLEKVVYNCYADIEYNRPQEIELLELNWEIPEKTFDKITYTEAIDIANAKGVEIEWGEDLSRAAERAVGDEMGGLYFITEWPTQTRPFYTLPHKHDNKVCKAFDLMYKELEISSGAQRVHKYDLLVENISNMGMNPDSFETYLEAFKFGMPPHAGWGLGADRFAMVLTAQDNIRECVLFPRDRQRLTP.

Residue E176 participates in L-aspartate binding. Residues Q198–K201 form an aspartate region. R220 contacts L-aspartate. Residues R220 to E222, R228 to L230, and E361 each bind ATP. E361 and S364 together coordinate Mg(2+). L-aspartate-binding residues include S364 and R368. Position 409–412 (G409–R412) interacts with ATP.

This sequence belongs to the class-II aminoacyl-tRNA synthetase family. Type 2 subfamily. As to quaternary structure, homodimer. The cofactor is Mg(2+).

It is found in the cytoplasm. The catalysed reaction is tRNA(Asx) + L-aspartate + ATP = L-aspartyl-tRNA(Asx) + AMP + diphosphate. Functionally, aspartyl-tRNA synthetase with relaxed tRNA specificity since it is able to aspartylate not only its cognate tRNA(Asp) but also tRNA(Asn). Reaction proceeds in two steps: L-aspartate is first activated by ATP to form Asp-AMP and then transferred to the acceptor end of tRNA(Asp/Asn). This is Aspartate--tRNA(Asp/Asn) ligase from Methanococcus maripaludis (strain C5 / ATCC BAA-1333).